Reading from the N-terminus, the 334-residue chain is Chitin synthase export chaperone (334 aa).

7 helical membrane passes run 49 to 69, 85 to 105, 123 to 143, 159 to 179, 185 to 205, 220 to 240, and 244 to 264; these read IIFEGAASVMHIVALIMTVIM, ILSFFYLYMLLTAMSLIIDAG, GLSSAVITCLLINGFVGFQLY, LAAFAISFLVSLATFKSWAGL, VGLFVVLYLLNAVQLFVYVAM, LGDIAFGIFFFVAGQVLLYAF, and ICIAISHYLDGLFLATVCNLL.

The protein belongs to the CHS7 family.

The protein resides in the endoplasmic reticulum membrane. Chaperone required for the export of the chitin synthase chs3 from the endoplasmic reticulum. Plays a critical role in cell wall integrity and virulence. The polypeptide is Chitin synthase export chaperone (Fusarium oxysporum f. sp. lycopersici (strain 4287 / CBS 123668 / FGSC 9935 / NRRL 34936) (Fusarium vascular wilt of tomato)).